A 294-amino-acid chain; its full sequence is Homeobox protein Nkx-2.5 (294 aa).

Disordered stretches follow at residues 48 to 69 (GSEPPALPELPEPPPAKPPAAF) and 102 to 122 (EQEKRELEDPERPRQRKRRKP). Positions 52-69 (PALPELPEPPPAKPPAAF) are enriched in pro residues. The span at 102-114 (EQEKRELEDPERP) shows a compositional bias: basic and acidic residues. The homeobox DNA-binding region spans 119–178 (RRKPRVLFSQAQVYELERRFKQQKYLSAPERDHLANVLKLTSTQVKIWFQNRRYKCKRQR).

Belongs to the NK-2 homeobox family. In terms of assembly, homodimer (via the homeobox); binds DNA as homodimer.

The protein resides in the nucleus. Functionally, transcription factor required for the development of the heart and the spleen. Implicated in commitment to and/or differentiation of the myocardial lineage. Binds to the core DNA motif of promoter. This Gallus gallus (Chicken) protein is Homeobox protein Nkx-2.5 (NKX-2.5).